A 470-amino-acid polypeptide reads, in one-letter code: Cell division protein FtsP (470 aa).

The tat-type signal signal peptide spans 1 to 27 (MSLSRRQFIQASGIALCAGAVPLKASA). The Plastocyanin-like domain maps to 68–164 (WGINGRYLGP…NGLAGMWLVE (97 aa)).

It belongs to the FtsP family. Exported by the Tat system. The position of the signal peptide cleavage has been experimentally proven. Can also be exported by the Sec system.

The protein resides in the periplasm. In terms of biological role, cell division protein that is required for growth during stress conditions. May be involved in protecting or stabilizing the divisomal assembly under conditions of stress. This Escherichia coli (strain K12) protein is Cell division protein FtsP.